A 120-amino-acid chain; its full sequence is NAD(P)H-quinone oxidoreductase subunit 3, chloroplastic (120 aa).

3 helical membrane passes run 9 to 29, 64 to 84, and 88 to 108; these read IFWA…LISG, MFAL…PWAM, and VLGV…IVGS.

This sequence belongs to the complex I subunit 3 family. NDH is composed of at least 16 different subunits, 5 of which are encoded in the nucleus.

The protein localises to the plastid. The protein resides in the chloroplast thylakoid membrane. It catalyses the reaction a plastoquinone + NADH + (n+1) H(+)(in) = a plastoquinol + NAD(+) + n H(+)(out). The enzyme catalyses a plastoquinone + NADPH + (n+1) H(+)(in) = a plastoquinol + NADP(+) + n H(+)(out). In terms of biological role, NDH shuttles electrons from NAD(P)H:plastoquinone, via FMN and iron-sulfur (Fe-S) centers, to quinones in the photosynthetic chain and possibly in a chloroplast respiratory chain. The immediate electron acceptor for the enzyme in this species is believed to be plastoquinone. Couples the redox reaction to proton translocation, and thus conserves the redox energy in a proton gradient. The polypeptide is NAD(P)H-quinone oxidoreductase subunit 3, chloroplastic (Buxus microphylla (Littleleaf boxwood)).